The following is an 826-amino-acid chain: Prominin-1-A (826 aa).

3 consecutive transmembrane segments (helical) span residues 50 to 70, 106 to 126, and 153 to 173; these read YYEPGAIGILFNMMHAFLFVV, VVCAALGLLFTVLLPLVGLLF, and LLTTLLLTTTFIITAGVLCAY. N-linked (GlcNAc...) asparagine glycosylation is found at N178, N268, N286, N327, N388, and N404. The next 2 helical transmembrane spans lie at 439-459 and 483-503; these read CMIVLILTFNFLGLLCGILGF and VGFSFLFSWVLMGVITALFLA. Residues N576, N582, N617, and N693 are each glycosylated (N-linked (GlcNAc...) asparagine).

Belongs to the prominin family.

It localises to the apical cell membrane. The protein resides in the cell projection. It is found in the microvillus membrane. Its subcellular location is the endoplasmic reticulum. The protein localises to the endoplasmic reticulum-Golgi intermediate compartment. In terms of biological role, may play a role in cell differentiation, proliferation and apoptosis. Binds cholesterol in cholesterol-containing plasma membrane microdomains and may play a role in the organization of the apical plasma membrane in epithelial cells. Involved in regulation of MAPK and Akt signaling pathways. The protein is Prominin-1-A (prom1a) of Danio rerio (Zebrafish).